The primary structure comprises 235 residues: Purine nucleoside phosphorylase DeoD-type (235 aa).

Residue His4 coordinates a purine D-ribonucleoside. Residues Gly20, Arg24, Arg43, and 87 to 90 (RVGT) contribute to the phosphate site. A purine D-ribonucleoside contacts are provided by residues 179–181 (EME) and 203–204 (SD). Catalysis depends on Asp204, which acts as the Proton donor.

Belongs to the PNP/UDP phosphorylase family. In terms of assembly, homohexamer; trimer of homodimers.

The enzyme catalyses a purine D-ribonucleoside + phosphate = a purine nucleobase + alpha-D-ribose 1-phosphate. It carries out the reaction a purine 2'-deoxy-D-ribonucleoside + phosphate = a purine nucleobase + 2-deoxy-alpha-D-ribose 1-phosphate. In terms of biological role, catalyzes the reversible phosphorolytic breakdown of the N-glycosidic bond in the beta-(deoxy)ribonucleoside molecules, with the formation of the corresponding free purine bases and pentose-1-phosphate. This chain is Purine nucleoside phosphorylase DeoD-type, found in Clostridium perfringens (strain ATCC 13124 / DSM 756 / JCM 1290 / NCIMB 6125 / NCTC 8237 / Type A).